Here is a 296-residue protein sequence, read N- to C-terminus: Small ribosomal subunit biogenesis GTPase RsgA (296 aa).

A CP-type G domain is found at 65-226 (TNELIRPPIS…VADTPGFSSL (162 aa)). GTP is bound by residues 114-117 (TKMD) and 169-177 (GQSGVGKSS). The Zn(2+) site is built by C250, C255, H257, and C263.

Belongs to the TRAFAC class YlqF/YawG GTPase family. RsgA subfamily. In terms of assembly, monomer. Associates with 30S ribosomal subunit, binds 16S rRNA. Requires Zn(2+) as cofactor.

The protein localises to the cytoplasm. One of several proteins that assist in the late maturation steps of the functional core of the 30S ribosomal subunit. Helps release RbfA from mature subunits. May play a role in the assembly of ribosomal proteins into the subunit. Circularly permuted GTPase that catalyzes slow GTP hydrolysis, GTPase activity is stimulated by the 30S ribosomal subunit. The protein is Small ribosomal subunit biogenesis GTPase RsgA of Bacillus velezensis (strain DSM 23117 / BGSC 10A6 / LMG 26770 / FZB42) (Bacillus amyloliquefaciens subsp. plantarum).